The following is a 100-amino-acid chain: Integration host factor subunit alpha (100 aa).

Belongs to the bacterial histone-like protein family. Heterodimer of an alpha and a beta chain.

Its function is as follows. This protein is one of the two subunits of integration host factor, a specific DNA-binding protein that functions in genetic recombination as well as in transcriptional and translational control. The sequence is that of Integration host factor subunit alpha from Hahella chejuensis (strain KCTC 2396).